Consider the following 154-residue polypeptide: Fibroblast growth factor 2 (154 aa).

Positions 1 to 9 (MAAGSITSL) are excised as a propeptide. Positions 1–20 (MAAGSITSLPALPEDGGGAF) are disordered. A heparin-binding site is contributed by Asn-35. Tyr-81 carries the phosphotyrosine; by TEC modification. Lys-94 participates in a covalent cross-link: Glycyl lysine isopeptide (Lys-Gly) (interchain with G-Cter in SUMO1). The interval 127–143 (KRTGQYKLGSKTGPGQK) is heparin-binding.

The protein belongs to the heparin-binding growth factors family. In terms of assembly, monomer. Homodimer. Interacts with FGFR1, FGFR2, FGFR3 and FGFR4. Affinity between fibroblast growth factors (FGFs) and their receptors is increased by heparan sulfate glycosaminoglycans that function as coreceptors. Interacts with CSPG4, FGFBP1 and TEC. Found in a complex with FGFBP1, FGF1 and FGF2. Interacts with FGFBP3. Interacts with integrin ITGAV:ITGB3; the interaction is required for FGF2 signaling. Interacts with SNORC (via the extracellular domain). Interacts with GPC3. In terms of processing, phosphorylation at Tyr-81 regulates FGF2 unconventional secretion. In terms of tissue distribution, found in all tissues examined.

It is found in the secreted. The protein resides in the nucleus. In terms of biological role, acts as a ligand for FGFR1, FGFR2, FGFR3 and FGFR4. Also acts as an integrin ligand which is required for FGF2 signaling. Binds to integrin ITGAV:ITGB3. Plays an important role in the regulation of cell survival, cell division, cell differentiation and cell migration. Functions as a potent mitogen in vitro. Can induce angiogenesis. Mediates phosphorylation of ERK1/2 and thereby promotes retinal lens fiber differentiation. This chain is Fibroblast growth factor 2 (Fgf2), found in Rattus norvegicus (Rat).